Consider the following 44-residue polypeptide: Large ribosomal subunit protein bL34 (44 aa).

Positions 21–44 (RMDTSGGRRILSARRRKGRKTISA) are disordered. Positions 31 to 44 (LSARRRKGRKTISA) are enriched in basic residues.

Belongs to the bacterial ribosomal protein bL34 family.

This is Large ribosomal subunit protein bL34 from Endomicrobium trichonymphae.